A 471-amino-acid chain; its full sequence is Tryptophanase (471 aa).

An N6-acetyllysine mark is found at lysine 5, lysine 115, and lysine 156. Lysine 270 is modified (N6-(pyridoxal phosphate)lysine). Lysine 450 is modified (N6-acetyllysine).

Belongs to the beta-eliminating lyase family. As to quaternary structure, homotetramer. It depends on pyridoxal 5'-phosphate as a cofactor.

It carries out the reaction L-tryptophan + H2O = indole + pyruvate + NH4(+). It functions in the pathway amino-acid degradation; L-tryptophan degradation via pyruvate pathway; indole and pyruvate from L-tryptophan: step 1/1. The chain is Tryptophanase from Escherichia coli O9:H4 (strain HS).